A 399-amino-acid chain; its full sequence is Formate-dependent phosphoribosylglycinamide formyltransferase (399 aa).

N(1)-(5-phospho-beta-D-ribosyl)glycinamide contacts are provided by residues 8 to 9 (EL) and glutamate 68. ATP-binding positions include arginine 100, lysine 141, 146-151 (SSGHGQ), 185-188 (EALA), and glutamate 193. The ATP-grasp domain maps to 105-308 (VLAHEELGLP…EFALHARAIL (204 aa)). Residues glutamate 266 and glutamate 279 each coordinate Mg(2+). Residues aspartate 286, lysine 361, and 368-369 (RR) contribute to the N(1)-(5-phospho-beta-D-ribosyl)glycinamide site.

The protein belongs to the PurK/PurT family. Homodimer.

The enzyme catalyses N(1)-(5-phospho-beta-D-ribosyl)glycinamide + formate + ATP = N(2)-formyl-N(1)-(5-phospho-beta-D-ribosyl)glycinamide + ADP + phosphate + H(+). It participates in purine metabolism; IMP biosynthesis via de novo pathway; N(2)-formyl-N(1)-(5-phospho-D-ribosyl)glycinamide from N(1)-(5-phospho-D-ribosyl)glycinamide (formate route): step 1/1. Its function is as follows. Involved in the de novo purine biosynthesis. Catalyzes the transfer of formate to 5-phospho-ribosyl-glycinamide (GAR), producing 5-phospho-ribosyl-N-formylglycinamide (FGAR). Formate is provided by PurU via hydrolysis of 10-formyl-tetrahydrofolate. This Bifidobacterium longum (strain NCC 2705) protein is Formate-dependent phosphoribosylglycinamide formyltransferase.